The following is a 453-amino-acid chain: Ribosomal protein uS12 methylthiotransferase RimO (453 aa).

In terms of domain architecture, MTTase N-terminal spans 3 to 118; that stretch reads KKVGIISLGC…IAKVIEEFYS (116 aa). [4Fe-4S] cluster is bound by residues cysteine 12, cysteine 48, cysteine 81, cysteine 162, cysteine 166, and cysteine 169. A Radical SAM core domain is found at 148-378; it reads STNSGYAYLK…MQLQKEIVQR (231 aa). The TRAM domain occupies 381–449; it reads ESRLEKVYKT…DYDLIGEVIN (69 aa).

The protein belongs to the methylthiotransferase family. RimO subfamily. The cofactor is [4Fe-4S] cluster.

Its subcellular location is the cytoplasm. It carries out the reaction L-aspartate(89)-[ribosomal protein uS12]-hydrogen + (sulfur carrier)-SH + AH2 + 2 S-adenosyl-L-methionine = 3-methylsulfanyl-L-aspartate(89)-[ribosomal protein uS12]-hydrogen + (sulfur carrier)-H + 5'-deoxyadenosine + L-methionine + A + S-adenosyl-L-homocysteine + 2 H(+). Catalyzes the methylthiolation of an aspartic acid residue of ribosomal protein uS12. The polypeptide is Ribosomal protein uS12 methylthiotransferase RimO (Acetivibrio thermocellus (strain ATCC 27405 / DSM 1237 / JCM 9322 / NBRC 103400 / NCIMB 10682 / NRRL B-4536 / VPI 7372) (Clostridium thermocellum)).